Consider the following 564-residue polypeptide: Proline--tRNA ligase (564 aa).

This sequence belongs to the class-II aminoacyl-tRNA synthetase family. ProS type 1 subfamily. As to quaternary structure, homodimer.

Its subcellular location is the cytoplasm. The catalysed reaction is tRNA(Pro) + L-proline + ATP = L-prolyl-tRNA(Pro) + AMP + diphosphate. Catalyzes the attachment of proline to tRNA(Pro) in a two-step reaction: proline is first activated by ATP to form Pro-AMP and then transferred to the acceptor end of tRNA(Pro). As ProRS can inadvertently accommodate and process non-cognate amino acids such as alanine and cysteine, to avoid such errors it has two additional distinct editing activities against alanine. One activity is designated as 'pretransfer' editing and involves the tRNA(Pro)-independent hydrolysis of activated Ala-AMP. The other activity is designated 'posttransfer' editing and involves deacylation of mischarged Ala-tRNA(Pro). The misacylated Cys-tRNA(Pro) is not edited by ProRS. This is Proline--tRNA ligase from Xanthomonas oryzae pv. oryzae (strain KACC10331 / KXO85).